Here is a 268-residue protein sequence, read N- to C-terminus: MTRYQTLFTHLQRRQEGALVPFVTLGDPTPSLSLQIIDALVESGADALELGIPFSDPLADGPVIQSATLRALQAGVTPERCFTLLATLREKYPQLPIGLLMYANLVVNPGIDTFYRRCAQAGIDSVLIADVPLEESAPFHAAAQRYGVAPIYLCPPNADDVLLQQLAARSQGYVYLLSRAGVTGSDRPCLPPLRHLTTRLAALGAAPTLQGFGIQTPDQVRSALDGGAAGAISGSAVVDLIARHLDTPPQMLQQLRAFIQTMKAATRA.

Residues Glu49 and Asp60 each act as proton acceptor in the active site.

It belongs to the TrpA family. As to quaternary structure, tetramer of two alpha and two beta chains.

It catalyses the reaction (1S,2R)-1-C-(indol-3-yl)glycerol 3-phosphate + L-serine = D-glyceraldehyde 3-phosphate + L-tryptophan + H2O. It functions in the pathway amino-acid biosynthesis; L-tryptophan biosynthesis; L-tryptophan from chorismate: step 5/5. In terms of biological role, the alpha subunit is responsible for the aldol cleavage of indoleglycerol phosphate to indole and glyceraldehyde 3-phosphate. The protein is Tryptophan synthase alpha chain of Edwardsiella ictaluri (strain 93-146).